A 434-amino-acid chain; its full sequence is MAHVVILGAGTGGMPAAYEMKEALGSGHEVTLISANDYFQFVPSNPWVGVGWKERDDIAFPIRHYVERKGIHFIAQSAEQIDAEAQNITLADGNTVHYDYLMIATGPKLAFENVPGSDPHEGPVQSICTVDHAERAFAEYQALLREPGPIVIGAMAGASCFGPAYEYAMIVASDLKKRGMRDKIPSFTFITSEPYIGHLGIQGVGDSKGILTKGLKEEGIEAYTNCKVTKVEDNKMYVTQVDEKGETIKEMVLPVKFGMMIPAFKGVPAVAGVEGLCNPGGFVLVDEHQRSKKYANIFAAGIAIAIPPVETTPVPTGAPKTGYMIESMVSAAVHNIKADLEGRKGEQTMGTWNAVCFADMGDRGAAFIALPQLKPRKVDVFAYGRWVHLAKVAFEKYFIRKMKMGVSEPFYEKVLFKMMGITRLKEEDTHRKAS.

Residues 8 to 12, 34 to 35, and 77 to 78 each bind FAD; these read GAGTG and SA. The active-site Cysteine persulfide intermediate is the C160. FAD is bound by residues I302 and G322. The active-site Cysteine persulfide intermediate is C356. K391 lines the FAD pocket.

The protein belongs to the SQRD family. Homodimer. FAD is required as a cofactor.

Its subcellular location is the membrane. The enzyme catalyses n a quinone + n hydrogen sulfide + n H(+) = polysulfur(n-2) + n a quinol. Catalyzes the oxidation of hydrogen sulfide, with the help of a quinone. Consecutive reaction cycles lead to the accumulation of a polysulfide product on the active site Cys residues; these products are released when they exceed a critical length, typically as cyclooctasulfur. In Acidithiobacillus ferrooxidans (strain ATCC 23270 / DSM 14882 / CIP 104768 / NCIMB 8455) (Ferrobacillus ferrooxidans (strain ATCC 23270)), this protein is Sulfide-quinone reductase.